We begin with the raw amino-acid sequence, 89 residues long: MNITLILFLIGILGFVLNRKNIILMLISIEIMLLAITFLILVSSLNMDDIIGQTYAIYIIVVAGAESAIGLAILVAFYRLRGSITIEYK.

3 helical membrane passes run 1–21 (MNIT…NRKN), 22–42 (IILM…LILV), and 57–77 (IYII…LVAF).

This sequence belongs to the complex I subunit 4L family.

It is found in the mitochondrion membrane. The enzyme catalyses a ubiquinone + NADH + 5 H(+)(in) = a ubiquinol + NAD(+) + 4 H(+)(out). In terms of biological role, core subunit of the mitochondrial membrane respiratory chain NADH dehydrogenase (Complex I) that is believed to belong to the minimal assembly required for catalysis. Complex I functions in the transfer of electrons from NADH to the respiratory chain. The immediate electron acceptor for the enzyme is believed to be ubiquinone. The protein is NADH-ubiquinone oxidoreductase chain 4L (ndh-4L) of Neurospora crassa (strain ATCC 24698 / 74-OR23-1A / CBS 708.71 / DSM 1257 / FGSC 987).